The chain runs to 130 residues: Small ribosomal subunit protein uS8 (130 aa).

It belongs to the universal ribosomal protein uS8 family. Part of the 30S ribosomal subunit.

Functionally, one of the primary rRNA binding proteins, it binds directly to 16S rRNA central domain where it helps coordinate assembly of the platform of the 30S subunit. In Methanosphaerula palustris (strain ATCC BAA-1556 / DSM 19958 / E1-9c), this protein is Small ribosomal subunit protein uS8.